The primary structure comprises 504 residues: Maturase K (504 aa).

The protein belongs to the intron maturase 2 family. MatK subfamily.

It is found in the plastid. It localises to the chloroplast. In terms of biological role, usually encoded in the trnK tRNA gene intron. Probably assists in splicing its own and other chloroplast group II introns. This chain is Maturase K, found in Lepidium virginicum (Virginia pepperweed).